The following is a 600-amino-acid chain: Proline--tRNA ligase (600 aa).

This sequence belongs to the class-II aminoacyl-tRNA synthetase family. ProS type 1 subfamily. As to quaternary structure, homodimer.

The protein resides in the cytoplasm. It catalyses the reaction tRNA(Pro) + L-proline + ATP = L-prolyl-tRNA(Pro) + AMP + diphosphate. Functionally, catalyzes the attachment of proline to tRNA(Pro) in a two-step reaction: proline is first activated by ATP to form Pro-AMP and then transferred to the acceptor end of tRNA(Pro). As ProRS can inadvertently accommodate and process non-cognate amino acids such as alanine and cysteine, to avoid such errors it has two additional distinct editing activities against alanine. One activity is designated as 'pretransfer' editing and involves the tRNA(Pro)-independent hydrolysis of activated Ala-AMP. The other activity is designated 'posttransfer' editing and involves deacylation of mischarged Ala-tRNA(Pro). The misacylated Cys-tRNA(Pro) is not edited by ProRS. The protein is Proline--tRNA ligase of Prochlorococcus marinus (strain MIT 9312).